The sequence spans 512 residues: MGVIDMVLFWVLLVNALLIVDASSRNMPFAYQNEMQRHCSSTKYTSLCVQNLREFRHGSLDGLDFVSFLVNKTISDSNLLIPPLSSSMGSSKLVSLEDSTYTLPSPSVSDSCERLMKMSTRRLRQAMEALNGSSRKRHTKHDVQTWLSAAMTFQQACKDSILDSGGSSSASAISHISQKMDHLSRLVSNSLTLVDTIMKNPKPKTKSTALPRWVTAGERRLLVGRARAHVVVAKDGSGDYRTVMEAVTAAHGNGKDLTVIVGDDSATGGTSVPDTATMTVTGDGFIARDIGIKNIAGPRGHQAIALSITSDQSVLYRCSISGYQDTLYAAALRQFYRECDIYGTIDFIFGNAAAVFQSCNIFLRRPHGVKAYNVILANGRTDQRQNTGFALHSCRIRTDSDLSPVKHKYSSYLGRPWRKYSRAIVMESYIDDAIAEGGWAGWLDSGDEVLKTLYFGEFKNYGPKARISKRVTWEGFHSIGFEEANYFSVVKRRNGEDVTNGFKYKFKIKIQI.

An N-terminal signal peptide occupies residues 1 to 24 (MGVIDMVLFWVLLVNALLIVDASS). Residues 29-193 (FAYQNEMQRH…SRLVSNSLTL (165 aa)) are pectinesterase inhibitor 54. Residues Asn71 and Asn131 are each glycosylated (N-linked (GlcNAc...) asparagine). The segment at 229–496 (HVVVAKDGSG…FSVVKRRNGE (268 aa)) is pectinesterase 54. Gln302 is a substrate binding site. Asp325 serves as the catalytic Proton donor; for pectinesterase activity. An intrachain disulfide couples Cys339 to Cys359. Residue Asp346 is the Nucleophile; for pectinesterase activity of the active site. Substrate is bound by residues Arg415 and Trp417.

In the N-terminal section; belongs to the PMEI family. This sequence in the C-terminal section; belongs to the pectinesterase family. In terms of tissue distribution, expressed in siliques.

It localises to the secreted. The protein localises to the cell wall. The catalysed reaction is [(1-&gt;4)-alpha-D-galacturonosyl methyl ester](n) + n H2O = [(1-&gt;4)-alpha-D-galacturonosyl](n) + n methanol + n H(+). It participates in glycan metabolism; pectin degradation; 2-dehydro-3-deoxy-D-gluconate from pectin: step 1/5. Acts in the modification of cell walls via demethylesterification of cell wall pectin. The protein is Probable pectinesterase/pectinesterase inhibitor 54 (PME54) of Arabidopsis thaliana (Mouse-ear cress).